A 404-amino-acid chain; its full sequence is p-hydroxybenzoate hydroxylase (404 aa).

Residues glutamate 35, 45-50 (RIRAGI), and glutamine 105 contribute to the FAD site. Residues tyrosine 203, 214 to 216 (SMR), and tyrosine 224 each bind substrate. Aspartate 288 is a binding site for FAD. Position 295 (proline 295) interacts with substrate. 301–302 (LN) serves as a coordination point for FAD.

It belongs to the aromatic-ring hydroxylase family. Homodimer. FAD is required as a cofactor.

The catalysed reaction is 4-hydroxybenzoate + NADPH + O2 + H(+) = 3,4-dihydroxybenzoate + NADP(+) + H2O. It participates in aromatic compound metabolism; benzoate degradation via hydroxylation; 3,4-dihydroxybenzoate from benzoate: step 2/2. Its function is as follows. Catalyzes the incorporation of an atom of dioxygen into p-hydroxybenzoate (p-OHB) to form 3,4-dihydroxybenzoate (3,4DOHB). The reaction occurs in two parts: reduction of the flavin adenine dinucleotide (FAD) in the enzyme by reduced nicotinamide adenine dinucleotide phosphate (NADPH) in response to binding p-hydroxybenzoate to the enzyme and oxidation of reduced FAD with oxygen to form a hydroperoxide, which then oxygenates p-hydroxybenzoate. The polypeptide is p-hydroxybenzoate hydroxylase (pobA) (Acinetobacter baylyi (strain ATCC 33305 / BD413 / ADP1)).